The sequence spans 373 residues: 1-deoxy-D-xylulose 5-phosphate reductoisomerase (373 aa).

NADPH contacts are provided by T10, G11, S12, I13, R37, and N112. 1-deoxy-D-xylulose 5-phosphate is bound at residue K113. E114 is a binding site for NADPH. D134 serves as a coordination point for Mn(2+). Residues S135, E136, S160, and H183 each coordinate 1-deoxy-D-xylulose 5-phosphate. E136 serves as a coordination point for Mn(2+). Residue G189 participates in NADPH binding. The 1-deoxy-D-xylulose 5-phosphate site is built by S196, N201, K202, and E205. E205 contacts Mn(2+).

This sequence belongs to the DXR family. It depends on Mg(2+) as a cofactor. Mn(2+) serves as cofactor.

It catalyses the reaction 2-C-methyl-D-erythritol 4-phosphate + NADP(+) = 1-deoxy-D-xylulose 5-phosphate + NADPH + H(+). Its pathway is isoprenoid biosynthesis; isopentenyl diphosphate biosynthesis via DXP pathway; isopentenyl diphosphate from 1-deoxy-D-xylulose 5-phosphate: step 1/6. Its function is as follows. Catalyzes the NADPH-dependent rearrangement and reduction of 1-deoxy-D-xylulose-5-phosphate (DXP) to 2-C-methyl-D-erythritol 4-phosphate (MEP). The chain is 1-deoxy-D-xylulose 5-phosphate reductoisomerase from Persephonella marina (strain DSM 14350 / EX-H1).